The chain runs to 452 residues: UDP-N-acetylmuramoylalanine--D-glutamate ligase (452 aa).

119–125 is an ATP binding site; it reads GSNGKTT.

Belongs to the MurCDEF family.

The protein localises to the cytoplasm. The enzyme catalyses UDP-N-acetyl-alpha-D-muramoyl-L-alanine + D-glutamate + ATP = UDP-N-acetyl-alpha-D-muramoyl-L-alanyl-D-glutamate + ADP + phosphate + H(+). It functions in the pathway cell wall biogenesis; peptidoglycan biosynthesis. Its function is as follows. Cell wall formation. Catalyzes the addition of glutamate to the nucleotide precursor UDP-N-acetylmuramoyl-L-alanine (UMA). The chain is UDP-N-acetylmuramoylalanine--D-glutamate ligase from Streptococcus pyogenes serotype M6 (strain ATCC BAA-946 / MGAS10394).